The chain runs to 361 residues: Phosphoserine aminotransferase (361 aa).

L-glutamate is bound at residue R42. Residues 76-77 (AR), W102, T153, D173, and Q196 each bind pyridoxal 5'-phosphate. At K197 the chain carries N6-(pyridoxal phosphate)lysine. 238 to 239 (NT) serves as a coordination point for pyridoxal 5'-phosphate.

This sequence belongs to the class-V pyridoxal-phosphate-dependent aminotransferase family. SerC subfamily. As to quaternary structure, homodimer. Pyridoxal 5'-phosphate serves as cofactor.

The protein localises to the cytoplasm. It catalyses the reaction O-phospho-L-serine + 2-oxoglutarate = 3-phosphooxypyruvate + L-glutamate. The catalysed reaction is 4-(phosphooxy)-L-threonine + 2-oxoglutarate = (R)-3-hydroxy-2-oxo-4-phosphooxybutanoate + L-glutamate. The protein operates within amino-acid biosynthesis; L-serine biosynthesis; L-serine from 3-phospho-D-glycerate: step 2/3. It participates in cofactor biosynthesis; pyridoxine 5'-phosphate biosynthesis; pyridoxine 5'-phosphate from D-erythrose 4-phosphate: step 3/5. In terms of biological role, catalyzes the reversible conversion of 3-phosphohydroxypyruvate to phosphoserine and of 3-hydroxy-2-oxo-4-phosphonooxybutanoate to phosphohydroxythreonine. The chain is Phosphoserine aminotransferase from Buchnera aphidicola subsp. Schizaphis graminum (strain Sg).